The chain runs to 527 residues: GMP synthase [glutamine-hydrolyzing] (527 aa).

Residues 4-202 form the Glutamine amidotransferase type-1 domain; that stretch reads KILILDFGSQ…VLKICGAKPD (199 aa). The active-site Nucleophile is the cysteine 81. Active-site residues include histidine 176 and glutamate 178. The GMPS ATP-PPase domain maps to 203–395; that stretch reads WEMGNYIDEA…LGLPPSMVYR (193 aa). ATP is bound at residue 230-236; the sequence is SGGVDSS.

Homodimer.

The catalysed reaction is XMP + L-glutamine + ATP + H2O = GMP + L-glutamate + AMP + diphosphate + 2 H(+). Its pathway is purine metabolism; GMP biosynthesis; GMP from XMP (L-Gln route): step 1/1. Catalyzes the synthesis of GMP from XMP. In Paraburkholderia phymatum (strain DSM 17167 / CIP 108236 / LMG 21445 / STM815) (Burkholderia phymatum), this protein is GMP synthase [glutamine-hydrolyzing].